The sequence spans 228 residues: Phosphoribosylformylglycinamidine synthase subunit PurQ (228 aa).

The Glutamine amidotransferase type-1 domain maps to F3–V226. Catalysis depends on C86, which acts as the Nucleophile. Catalysis depends on residues H195 and E197.

In terms of assembly, part of the FGAM synthase complex composed of 1 PurL, 1 PurQ and 2 PurS subunits.

Its subcellular location is the cytoplasm. It catalyses the reaction N(2)-formyl-N(1)-(5-phospho-beta-D-ribosyl)glycinamide + L-glutamine + ATP + H2O = 2-formamido-N(1)-(5-O-phospho-beta-D-ribosyl)acetamidine + L-glutamate + ADP + phosphate + H(+). The enzyme catalyses L-glutamine + H2O = L-glutamate + NH4(+). It functions in the pathway purine metabolism; IMP biosynthesis via de novo pathway; 5-amino-1-(5-phospho-D-ribosyl)imidazole from N(2)-formyl-N(1)-(5-phospho-D-ribosyl)glycinamide: step 1/2. Its function is as follows. Part of the phosphoribosylformylglycinamidine synthase complex involved in the purines biosynthetic pathway. Catalyzes the ATP-dependent conversion of formylglycinamide ribonucleotide (FGAR) and glutamine to yield formylglycinamidine ribonucleotide (FGAM) and glutamate. The FGAM synthase complex is composed of three subunits. PurQ produces an ammonia molecule by converting glutamine to glutamate. PurL transfers the ammonia molecule to FGAR to form FGAM in an ATP-dependent manner. PurS interacts with PurQ and PurL and is thought to assist in the transfer of the ammonia molecule from PurQ to PurL. The sequence is that of Phosphoribosylformylglycinamidine synthase subunit PurQ from Geobacillus thermodenitrificans (strain NG80-2).